We begin with the raw amino-acid sequence, 153 residues long: Peptide methionine sulfoxide reductase MsrA (153 aa).

Cys-10 is an active-site residue.

It belongs to the MsrA Met sulfoxide reductase family.

The enzyme catalyses L-methionyl-[protein] + [thioredoxin]-disulfide + H2O = L-methionyl-(S)-S-oxide-[protein] + [thioredoxin]-dithiol. It catalyses the reaction [thioredoxin]-disulfide + L-methionine + H2O = L-methionine (S)-S-oxide + [thioredoxin]-dithiol. Has an important function as a repair enzyme for proteins that have been inactivated by oxidation. Catalyzes the reversible oxidation-reduction of methionine sulfoxide in proteins to methionine. In Methanococcoides burtonii (strain DSM 6242 / NBRC 107633 / OCM 468 / ACE-M), this protein is Peptide methionine sulfoxide reductase MsrA.